Here is a 469-residue protein sequence, read N- to C-terminus: MSAVMTPAEFNDYKVADISLAAWGRRETIIAESEMPALMGLRRKYAGDQPLKGAKILGCIHMTIQTAVLIETLVALGAEVRWSSCNIFSTQDQAAAAIAAAGIPVFAWKGETEEEYEWCIEQTILKDGQPWDANMILDDGGDLTEIIHKKYPAMLDKIHGVTEETTTGVHRLLDMLAKGELKIPAINVNDSVTKSKNDNKYGCRHSLNDAIKRGTDHLLSGKQALVIGYGDVGKGSAQSLRQEGMIVKVTEVDPICAMQACMDGFELVSPFIDGENDGTEASIDKALLGKIDLIVTTTGNVNVCDSNMLKALKKRAVVCNIGHFDNEIDTAFMRKNWAWEEVKPQVHKIHRTGPGSFDAQNDDYLILLAEGRLVNLGNATGHPSRIMDGSFANQVLAQIFLFEQKYADLAPAKKSERLTVEVLPKKLDEEVALEMVRGFGGVVTKLTKTQADYIGVTVEGPFKPDAYRY.

Residues Thr63, Asp139, and Glu164 each coordinate substrate. An NAD(+)-binding site is contributed by 165–167; it reads TTT. Residues Lys194 and Asp198 each contribute to the substrate site. Residues Asn199, 228–233, Glu251, Asn300, 321–323, and Asn375 each bind NAD(+); these read GYGDVG and IGH.

It belongs to the adenosylhomocysteinase family. It depends on NAD(+) as a cofactor.

It is found in the cytoplasm. The catalysed reaction is S-adenosyl-L-homocysteine + H2O = L-homocysteine + adenosine. The protein operates within amino-acid biosynthesis; L-homocysteine biosynthesis; L-homocysteine from S-adenosyl-L-homocysteine: step 1/1. In terms of biological role, may play a key role in the regulation of the intracellular concentration of adenosylhomocysteine. The polypeptide is Adenosylhomocysteinase (Pseudomonas syringae pv. syringae (strain B728a)).